Here is a 625-residue protein sequence, read N- to C-terminus: DNA mismatch repair protein MutL (625 aa).

The protein belongs to the DNA mismatch repair MutL/HexB family.

Functionally, this protein is involved in the repair of mismatches in DNA. It is required for dam-dependent methyl-directed DNA mismatch repair. May act as a 'molecular matchmaker', a protein that promotes the formation of a stable complex between two or more DNA-binding proteins in an ATP-dependent manner without itself being part of a final effector complex. The polypeptide is DNA mismatch repair protein MutL (Azorhizobium caulinodans (strain ATCC 43989 / DSM 5975 / JCM 20966 / LMG 6465 / NBRC 14845 / NCIMB 13405 / ORS 571)).